The following is a 554-amino-acid chain: Intraflagellar transport protein 56 (554 aa).

The disordered stretch occupies residues 1–24 (MMLSRAKPAVGRGVQHTDKRKKKG). 4 TPR repeats span residues 57 to 90 (EDTN…ENCN), 92 to 125 (EVWV…LQNR), 151 to 184 (TEDQ…NREY), and 468 to 501 (ANDC…EGKR).

The protein belongs to the IFT56 family. Component of the IFT complex B. Interacts with IFT46; the interaction is direct.

It is found in the cell projection. The protein resides in the cilium. Its function is as follows. Component of the intraflagellar transport (IFT) complex B required for transport of proteins in the motile cilium. Required for transport of specific ciliary cargo proteins related to motility, while it is neither required for IFT complex B assembly or motion nor for cilium assembly. Required for efficient coupling between the accumulation of GLI2 and GLI3 at the ciliary tips and their dissociation from the negative regulator SUFU. Plays a key role in maintaining the integrity of the IFT complex B and the proper ciliary localization of the IFT complex B components. Not required for IFT complex A ciliary localization or function. Essential for maintaining proper microtubule organization within the ciliary axoneme. The chain is Intraflagellar transport protein 56 from Homo sapiens (Human).